We begin with the raw amino-acid sequence, 325 residues long: Tetraacyldisaccharide 4'-kinase (325 aa).

Residue 55–62 (TAGGNGKT) coordinates ATP.

Belongs to the LpxK family.

The enzyme catalyses a lipid A disaccharide + ATP = a lipid IVA + ADP + H(+). It functions in the pathway glycolipid biosynthesis; lipid IV(A) biosynthesis; lipid IV(A) from (3R)-3-hydroxytetradecanoyl-[acyl-carrier-protein] and UDP-N-acetyl-alpha-D-glucosamine: step 6/6. Functionally, transfers the gamma-phosphate of ATP to the 4'-position of a tetraacyldisaccharide 1-phosphate intermediate (termed DS-1-P) to form tetraacyldisaccharide 1,4'-bis-phosphate (lipid IVA). In Enterobacter sp. (strain 638), this protein is Tetraacyldisaccharide 4'-kinase.